Consider the following 277-residue polypeptide: RNA-binding protein pno-1 (277 aa).

Disordered stretches follow at residues M1–K52 and D72–R100. Acidic residues predominate over residues F8–V27. Residues T30–D40 are compositionally biased toward polar residues. The segment covering D72 to D81 has biased composition (acidic residues). The region spanning G198–V250 is the KH domain.

It belongs to the PNO1 family. As to quaternary structure, part of the small subunit (SSU) processome, composed of more than 70 proteins and the RNA chaperone small nucleolar RNA (snoRNA) U3.

The protein localises to the nucleus. The protein resides in the nucleolus. Functionally, part of the small subunit (SSU) processome, first precursor of the small eukaryotic ribosomal subunit. During the assembly of the SSU processome in the nucleolus, many ribosome biogenesis factors, an RNA chaperone and ribosomal proteins associate with the nascent pre-rRNA and work in concert to generate RNA folding, modifications, rearrangements and cleavage as well as targeted degradation of pre-ribosomal RNA by the RNA exosome. Positively regulates dimethylation of two adjacent adenosines in the loop of a conserved hairpin near the 3'-end of 18S rRNA. This chain is RNA-binding protein pno-1, found in Caenorhabditis elegans.